The sequence spans 282 residues: Phosphatidylglycerol--prolipoprotein diacylglyceryl transferase (282 aa).

3 helical membrane passes run 19–39, 58–78, and 104–124; these read IGPF…VFGW, ISLV…ILGG, and GGMS…WFAY. Arg-149 is a binding site for a 1,2-diacyl-sn-glycero-3-phospho-(1'-sn-glycerol). 3 consecutive transmembrane segments (helical) span residues 190–210, 214–234, and 250–270; these read AGME…LGAL, GMIL…GEHF, and MGML…VLAI.

It belongs to the Lgt family.

It localises to the cell inner membrane. It catalyses the reaction L-cysteinyl-[prolipoprotein] + a 1,2-diacyl-sn-glycero-3-phospho-(1'-sn-glycerol) = an S-1,2-diacyl-sn-glyceryl-L-cysteinyl-[prolipoprotein] + sn-glycerol 1-phosphate + H(+). The protein operates within protein modification; lipoprotein biosynthesis (diacylglyceryl transfer). Catalyzes the transfer of the diacylglyceryl group from phosphatidylglycerol to the sulfhydryl group of the N-terminal cysteine of a prolipoprotein, the first step in the formation of mature lipoproteins. The chain is Phosphatidylglycerol--prolipoprotein diacylglyceryl transferase from Bradyrhizobium diazoefficiens (strain JCM 10833 / BCRC 13528 / IAM 13628 / NBRC 14792 / USDA 110).